A 260-amino-acid chain; its full sequence is 3'-5' ssDNA/RNA exonuclease TatD (260 aa).

The a divalent metal cation site is built by E92, H128, and H153.

It belongs to the metallo-dependent hydrolases superfamily. TatD-type hydrolase family. TatD subfamily. As to quaternary structure, monomer. Requires Mg(2+) as cofactor.

It localises to the cytoplasm. Functionally, 3'-5' exonuclease that prefers single-stranded DNA and RNA. May play a role in the H(2)O(2)-induced DNA damage repair. In Pantoea ananatis (strain LMG 20103), this protein is 3'-5' ssDNA/RNA exonuclease TatD.